The sequence spans 417 residues: Gamma-glutamyl phosphate reductase (417 aa).

Belongs to the gamma-glutamyl phosphate reductase family.

It localises to the cytoplasm. It catalyses the reaction L-glutamate 5-semialdehyde + phosphate + NADP(+) = L-glutamyl 5-phosphate + NADPH + H(+). The protein operates within amino-acid biosynthesis; L-proline biosynthesis; L-glutamate 5-semialdehyde from L-glutamate: step 2/2. In terms of biological role, catalyzes the NADPH-dependent reduction of L-glutamate 5-phosphate into L-glutamate 5-semialdehyde and phosphate. The product spontaneously undergoes cyclization to form 1-pyrroline-5-carboxylate. This chain is Gamma-glutamyl phosphate reductase, found in Streptococcus agalactiae serotype Ia (strain ATCC 27591 / A909 / CDC SS700).